The sequence spans 171 residues: Small ribosomal subunit protein mS25 (171 aa).

This sequence belongs to the mitochondrion-specific ribosomal protein mS25 family. Component of the mitochondrial ribosome small subunit (28S) which comprises a 12S rRNA and about 30 distinct proteins.

It localises to the mitochondrion. This Rattus norvegicus (Rat) protein is Small ribosomal subunit protein mS25 (Mrps25).